Reading from the N-terminus, the 137-residue chain is Ribonuclease P protein component (137 aa).

This sequence belongs to the RnpA family. Consists of a catalytic RNA component (M1 or rnpB) and a protein subunit.

The enzyme catalyses Endonucleolytic cleavage of RNA, removing 5'-extranucleotides from tRNA precursor.. RNaseP catalyzes the removal of the 5'-leader sequence from pre-tRNA to produce the mature 5'-terminus. It can also cleave other RNA substrates such as 4.5S RNA. The protein component plays an auxiliary but essential role in vivo by binding to the 5'-leader sequence and broadening the substrate specificity of the ribozyme. This Porphyromonas gingivalis (strain ATCC BAA-308 / W83) protein is Ribonuclease P protein component.